We begin with the raw amino-acid sequence, 160 residues long: Crossover junction endodeoxyribonuclease RuvC (160 aa).

Active-site residues include aspartate 9, glutamate 68, and aspartate 141. Mg(2+)-binding residues include aspartate 9, glutamate 68, and aspartate 141.

This sequence belongs to the RuvC family. In terms of assembly, homodimer which binds Holliday junction (HJ) DNA. The HJ becomes 2-fold symmetrical on binding to RuvC with unstacked arms; it has a different conformation from HJ DNA in complex with RuvA. In the full resolvosome a probable DNA-RuvA(4)-RuvB(12)-RuvC(2) complex forms which resolves the HJ. Mg(2+) is required as a cofactor.

It is found in the cytoplasm. The enzyme catalyses Endonucleolytic cleavage at a junction such as a reciprocal single-stranded crossover between two homologous DNA duplexes (Holliday junction).. Functionally, the RuvA-RuvB-RuvC complex processes Holliday junction (HJ) DNA during genetic recombination and DNA repair. Endonuclease that resolves HJ intermediates. Cleaves cruciform DNA by making single-stranded nicks across the HJ at symmetrical positions within the homologous arms, yielding a 5'-phosphate and a 3'-hydroxyl group; requires a central core of homology in the junction. The consensus cleavage sequence is 5'-(A/T)TT(C/G)-3'. Cleavage occurs on the 3'-side of the TT dinucleotide at the point of strand exchange. HJ branch migration catalyzed by RuvA-RuvB allows RuvC to scan DNA until it finds its consensus sequence, where it cleaves and resolves the cruciform DNA. The polypeptide is Crossover junction endodeoxyribonuclease RuvC (Campylobacter jejuni subsp. jejuni serotype O:2 (strain ATCC 700819 / NCTC 11168)).